The following is a 124-amino-acid chain: Ribonuclease pancreatic (124 aa).

Residues 1-13 are compositionally biased toward basic and acidic residues; it reads KESAAAKFERQHM. The segment at 1-24 is disordered; it reads KESAAAKFERQHMDSSTSSASSSN. The substrate site is built by Lys-7 and Arg-10. The active-site Proton acceptor is His-12. 4 cysteine pairs are disulfide-bonded: Cys-26–Cys-84, Cys-40–Cys-95, Cys-58–Cys-110, and Cys-65–Cys-72. Substrate is bound by residues 41-45, Lys-66, and Arg-85; that span reads KPVNT. His-119 serves as the catalytic Proton donor.

The protein belongs to the pancreatic ribonuclease family. As to quaternary structure, monomer. Interacts with and forms tight 1:1 complexes with RNH1. Dimerization of two such complexes may occur. Interaction with RNH1 inhibits this protein. Pancreas.

Its subcellular location is the secreted. The catalysed reaction is an [RNA] containing cytidine + H2O = an [RNA]-3'-cytidine-3'-phosphate + a 5'-hydroxy-ribonucleotide-3'-[RNA].. The enzyme catalyses an [RNA] containing uridine + H2O = an [RNA]-3'-uridine-3'-phosphate + a 5'-hydroxy-ribonucleotide-3'-[RNA].. In terms of biological role, endonuclease that catalyzes the cleavage of RNA on the 3' side of pyrimidine nucleotides. Acts on single-stranded and double-stranded RNA. This Connochaetes taurinus (Blue wildebeest) protein is Ribonuclease pancreatic (RNASE1).